Reading from the N-terminus, the 225-residue chain is Deoxyribose-phosphate aldolase (225 aa).

Residue Asp96 is the Proton donor/acceptor of the active site. Residue Lys157 is the Schiff-base intermediate with acetaldehyde of the active site. Lys185 serves as the catalytic Proton donor/acceptor.

The protein belongs to the DeoC/FbaB aldolase family. DeoC type 1 subfamily.

The protein localises to the cytoplasm. It carries out the reaction 2-deoxy-D-ribose 5-phosphate = D-glyceraldehyde 3-phosphate + acetaldehyde. Its pathway is carbohydrate degradation; 2-deoxy-D-ribose 1-phosphate degradation; D-glyceraldehyde 3-phosphate and acetaldehyde from 2-deoxy-alpha-D-ribose 1-phosphate: step 2/2. Catalyzes a reversible aldol reaction between acetaldehyde and D-glyceraldehyde 3-phosphate to generate 2-deoxy-D-ribose 5-phosphate. The polypeptide is Deoxyribose-phosphate aldolase (Microcystis aeruginosa (strain NIES-843 / IAM M-2473)).